Consider the following 78-residue polypeptide: Acyl carrier protein (78 aa).

Positions 4-78 (AEIKDKVYDI…QQAIDYIVKK (75 aa)) constitute a Carrier domain. Serine 39 is subject to O-(pantetheine 4'-phosphoryl)serine.

Belongs to the acyl carrier protein (ACP) family. 4'-phosphopantetheine is transferred from CoA to a specific serine of apo-ACP by AcpS. This modification is essential for activity because fatty acids are bound in thioester linkage to the sulfhydryl of the prosthetic group.

The protein resides in the cytoplasm. It functions in the pathway lipid metabolism; fatty acid biosynthesis. Functionally, carrier of the growing fatty acid chain in fatty acid biosynthesis. This Chlorobium limicola (strain DSM 245 / NBRC 103803 / 6330) protein is Acyl carrier protein.